Consider the following 219-residue polypeptide: ATP phosphoribosyltransferase (219 aa).

The protein belongs to the ATP phosphoribosyltransferase family. Short subfamily. As to quaternary structure, heteromultimer composed of HisG and HisZ subunits.

It is found in the cytoplasm. The catalysed reaction is 1-(5-phospho-beta-D-ribosyl)-ATP + diphosphate = 5-phospho-alpha-D-ribose 1-diphosphate + ATP. It participates in amino-acid biosynthesis; L-histidine biosynthesis; L-histidine from 5-phospho-alpha-D-ribose 1-diphosphate: step 1/9. Catalyzes the condensation of ATP and 5-phosphoribose 1-diphosphate to form N'-(5'-phosphoribosyl)-ATP (PR-ATP). Has a crucial role in the pathway because the rate of histidine biosynthesis seems to be controlled primarily by regulation of HisG enzymatic activity. This chain is ATP phosphoribosyltransferase, found in Syntrophotalea carbinolica (strain DSM 2380 / NBRC 103641 / GraBd1) (Pelobacter carbinolicus).